We begin with the raw amino-acid sequence, 188 residues long: dCTP deaminase (188 aa).

Residues 111 to 116, 135 to 137, glutamine 156, tyrosine 170, and glutamine 180 each bind dCTP; these read KSTYAR and TLE. The active-site Proton donor/acceptor is glutamate 137.

Belongs to the dCTP deaminase family. As to quaternary structure, homotrimer.

It carries out the reaction dCTP + H2O + H(+) = dUTP + NH4(+). It participates in pyrimidine metabolism; dUMP biosynthesis; dUMP from dCTP (dUTP route): step 1/2. Catalyzes the deamination of dCTP to dUTP. This Pseudomonas aeruginosa (strain UCBPP-PA14) protein is dCTP deaminase.